Consider the following 475-residue polypeptide: MNLETIIGLEVHVELKTNSKIFSASPTEFGAEPNTQTSVIDLGYPGVLPTLNKEAVNFAMKAAMALNCEIATETKFDRKNYFYPDNPKAYQISQFDKPIGENGWIEIEVDGKKKRIGITRLHLEEDAGKSTHTADGSLVDYNRQGMPLIEIVSEPDMRTPEEAYAYLEKLKSIIQYTGVSDCKMEEGSLRCDANISLRPVGQEKFGTKAELKNLNSFTYVQKGLEFEQARQEKELLSGGIIQQETRRYDEATKKTILMRVKEGSDDYRYFPEPDLVELYIDDEWKEAVRASIPELPDARKARYVAELGLPAYDAHVLTLTKEMSDFFEATVADGADAKLTSNWLMGEVLAYLNKQQKELKDVALTPAGLSKMVQLIEKGTISSKIAKKVFNELIEKGGDPEEIVKAKGLVQISDEGTLRKVVTEILDNNEQSIEDFKNGKDRAIGFLVGQIMKATKGQANPPLVNKILLEEINKR.

The protein belongs to the GatB/GatE family. GatB subfamily. As to quaternary structure, heterotrimer of A, B and C subunits.

The enzyme catalyses L-glutamyl-tRNA(Gln) + L-glutamine + ATP + H2O = L-glutaminyl-tRNA(Gln) + L-glutamate + ADP + phosphate + H(+). It catalyses the reaction L-aspartyl-tRNA(Asn) + L-glutamine + ATP + H2O = L-asparaginyl-tRNA(Asn) + L-glutamate + ADP + phosphate + 2 H(+). In terms of biological role, allows the formation of correctly charged Asn-tRNA(Asn) or Gln-tRNA(Gln) through the transamidation of misacylated Asp-tRNA(Asn) or Glu-tRNA(Gln) in organisms which lack either or both of asparaginyl-tRNA or glutaminyl-tRNA synthetases. The reaction takes place in the presence of glutamine and ATP through an activated phospho-Asp-tRNA(Asn) or phospho-Glu-tRNA(Gln). The protein is Aspartyl/glutamyl-tRNA(Asn/Gln) amidotransferase subunit B of Bacillus cereus (strain ATCC 10987 / NRS 248).